The following is a 248-amino-acid chain: Aspartate/glutamate leucyltransferase (248 aa).

The protein belongs to the R-transferase family. Bpt subfamily.

The protein resides in the cytoplasm. It catalyses the reaction N-terminal L-glutamyl-[protein] + L-leucyl-tRNA(Leu) = N-terminal L-leucyl-L-glutamyl-[protein] + tRNA(Leu) + H(+). The enzyme catalyses N-terminal L-aspartyl-[protein] + L-leucyl-tRNA(Leu) = N-terminal L-leucyl-L-aspartyl-[protein] + tRNA(Leu) + H(+). Functions in the N-end rule pathway of protein degradation where it conjugates Leu from its aminoacyl-tRNA to the N-termini of proteins containing an N-terminal aspartate or glutamate. This is Aspartate/glutamate leucyltransferase from Methylorubrum extorquens (strain PA1) (Methylobacterium extorquens).